A 65-amino-acid chain; its full sequence is Large ribosomal subunit protein bL35 (65 aa).

Disordered regions lie at residues M1–K23 and G29–H48. Residues L33–D43 are compositionally biased toward basic residues.

It belongs to the bacterial ribosomal protein bL35 family.

The protein is Large ribosomal subunit protein bL35 of Desulfatibacillum aliphaticivorans.